The primary structure comprises 383 residues: Erythronate-4-phosphate dehydrogenase (383 aa).

Residues Ser-45 and Thr-67 each coordinate substrate. Asp-147 provides a ligand contact to NAD(+). Arg-208 is a catalytic residue. Asp-232 contributes to the NAD(+) binding site. Residue Glu-237 is part of the active site. His-254 (proton donor) is an active-site residue. Gly-257 is an NAD(+) binding site. Tyr-258 lines the substrate pocket.

It belongs to the D-isomer specific 2-hydroxyacid dehydrogenase family. PdxB subfamily. In terms of assembly, homodimer.

It is found in the cytoplasm. It carries out the reaction 4-phospho-D-erythronate + NAD(+) = (R)-3-hydroxy-2-oxo-4-phosphooxybutanoate + NADH + H(+). It functions in the pathway cofactor biosynthesis; pyridoxine 5'-phosphate biosynthesis; pyridoxine 5'-phosphate from D-erythrose 4-phosphate: step 2/5. Its function is as follows. Catalyzes the oxidation of erythronate-4-phosphate to 3-hydroxy-2-oxo-4-phosphonooxybutanoate. The polypeptide is Erythronate-4-phosphate dehydrogenase (Psychromonas ingrahamii (strain DSM 17664 / CCUG 51855 / 37)).